The chain runs to 557 residues: 2-succinyl-5-enolpyruvyl-6-hydroxy-3-cyclohexene-1-carboxylate synthase (557 aa).

The interval 183–206 (YGGTEHPPVAPPLPPRRAPRAAAP) is disordered.

The protein belongs to the TPP enzyme family. MenD subfamily. Homodimer. The cofactor is Mg(2+). It depends on Mn(2+) as a cofactor. Thiamine diphosphate serves as cofactor.

The catalysed reaction is isochorismate + 2-oxoglutarate + H(+) = 5-enolpyruvoyl-6-hydroxy-2-succinyl-cyclohex-3-ene-1-carboxylate + CO2. The protein operates within quinol/quinone metabolism; 1,4-dihydroxy-2-naphthoate biosynthesis; 1,4-dihydroxy-2-naphthoate from chorismate: step 2/7. It functions in the pathway quinol/quinone metabolism; menaquinone biosynthesis. Its function is as follows. Catalyzes the thiamine diphosphate-dependent decarboxylation of 2-oxoglutarate and the subsequent addition of the resulting succinic semialdehyde-thiamine pyrophosphate anion to isochorismate to yield 2-succinyl-5-enolpyruvyl-6-hydroxy-3-cyclohexene-1-carboxylate (SEPHCHC). The sequence is that of 2-succinyl-5-enolpyruvyl-6-hydroxy-3-cyclohexene-1-carboxylate synthase from Halorhodospira halophila (strain DSM 244 / SL1) (Ectothiorhodospira halophila (strain DSM 244 / SL1)).